A 338-amino-acid polypeptide reads, in one-letter code: RNA 3'-terminal phosphate cyclase (338 aa).

ATP is bound by residues Gln103 and 283 to 287 (YLADQ). His308 (tele-AMP-histidine intermediate) is an active-site residue.

The protein belongs to the RNA 3'-terminal cyclase family. Type 1 subfamily.

The protein resides in the cytoplasm. The enzyme catalyses a 3'-end 3'-phospho-ribonucleotide-RNA + ATP = a 3'-end 2',3'-cyclophospho-ribonucleotide-RNA + AMP + diphosphate. Catalyzes the conversion of 3'-phosphate to a 2',3'-cyclic phosphodiester at the end of RNA. The mechanism of action of the enzyme occurs in 3 steps: (A) adenylation of the enzyme by ATP; (B) transfer of adenylate to an RNA-N3'P to produce RNA-N3'PP5'A; (C) and attack of the adjacent 2'-hydroxyl on the 3'-phosphorus in the diester linkage to produce the cyclic end product. The biological role of this enzyme is unknown but it is likely to function in some aspects of cellular RNA processing. This is RNA 3'-terminal phosphate cyclase from Escherichia coli O6:H1 (strain CFT073 / ATCC 700928 / UPEC).